The following is a 285-amino-acid chain: MAAISRAIRACAAAGSRRSMASSAKEVAAAGARAAAAVARRGREREREEDGRRVQWVFLGCPGVGKGTYASRLSQMLRVPHIATGDLVRDALASPGPFSEQLAEIVNNGKLVSDEIIINLLSKRLEEGAEKGELGFILDGFPRTIRQAEILEGVTDIDLVINLKLREEALLAKCLGRRMCSQCGGNFNVASIDMEGENGGPRMYMPPLLPPPQCESKLITRPDDTEEVVKERLRVYHDLCEPVEDFYRARGKLLEFNLPGGIPESWPKLLQALNLDPGNERSAAA.

Residues 1–33 (MAAISRAIRACAAAGSRRSMASSAKEVAAAGAR) constitute a chloroplast transit peptide. ATP is bound at residue 63–68 (GVGKGT). Positions 83 to 112 (ATGDLVRDALASPGPFSEQLAEIVNNGKLV) are NMP. Residues Thr84, Arg89, 110 to 112 (KLV), 140 to 143 (GFPR), and Gln147 each bind AMP. Positions 176-224 (GRRMCSQCGGNFNVASIDMEGENGGPRMYMPPLLPPPQCESKLITRPDD) are LID. Residues Arg177 and 186-187 (NF) contribute to the ATP site. AMP is bound by residues Arg221 and Arg232.

The protein belongs to the adenylate kinase family.

Its subcellular location is the plastid. The protein localises to the chloroplast. The enzyme catalyses AMP + ATP = 2 ADP. In terms of biological role, catalyzes the reversible transfer of the terminal phosphate group between ATP and AMP. Plays an important role in cellular energy homeostasis and in adenine nucleotide metabolism. The polypeptide is Probable adenylate kinase 6, chloroplastic (Oryza sativa subsp. japonica (Rice)).